The chain runs to 350 residues: Arabinogalactan endo-beta-1,4-galactanase A (350 aa).

A signal peptide spans 1–16 (MIYPLLLSALPLLSSA). The N-linked (GlcNAc...) asparagine glycan is linked to Asn128. The active-site Proton donor is the Glu152. Residue Glu262 is the Nucleophile of the active site.

It belongs to the glycosyl hydrolase 53 family.

It is found in the secreted. It carries out the reaction The enzyme specifically hydrolyzes (1-&gt;4)-beta-D-galactosidic linkages in type I arabinogalactans.. Endogalactanase involved in the degradation of plant cell wall polysaccharides, and more particularly of hairy regions of pectin. This is Arabinogalactan endo-beta-1,4-galactanase A (galA) from Aspergillus niger.